Reading from the N-terminus, the 285-residue chain is Aquaporin PIP2-5 (285 aa).

2 consecutive transmembrane segments (helical) span residues 38–58 (AVIA…ATVI) and 75–95 (CGGV…FILV). The NPA 1 motif lies at 107–109 (NPA). Helical transmembrane passes span 126 to 146 (LLYI…VKGF), 168 to 188 (GTGL…VFSA), and 202 to 222 (VLAP…TIPI). Residues 228 to 230 (NPA) carry the NPA 2 motif. Residues 250 to 270 (IFWVGPFIGAAIAAAYHQYVL) traverse the membrane as a helical segment.

This sequence belongs to the MIP/aquaporin (TC 1.A.8) family. PIP (TC 1.A.8.11) subfamily. As to quaternary structure, homomers. May interact with PIP1-2 to form heteromers. In terms of tissue distribution, specifically expressed in roots, in the exodermis, endodermis and xylem parenchyma. Polar localization to the external periclinal side of epidermal cells in root apices.

It localises to the cell membrane. Its function is as follows. Water channel required to facilitate the transport of water across cell membrane. Its function is impaired by Hg(2+). May play a role in water uptake from the root surface. Active as homomers. Increased activity when heteromerization with PIP1-2. The sequence is that of Aquaporin PIP2-5 (PIP2-5) from Zea mays (Maize).